A 1164-amino-acid polypeptide reads, in one-letter code: Shugoshin 2A (1164 aa).

Residues 62–113 are a coiled coil; that stretch reads LSKEKENSRRITTEKMQLQKEVEKLNFENTFLRLKLNTLNKKLVEIESHVSN. Disordered stretches follow at residues 160 to 269, 287 to 314, 390 to 492, 521 to 541, and 917 to 992; these read SEND…VTMR, HQPT…NTQR, RKVK…PFSR, TFVI…DKDT, and PLDS…ETHG. Low complexity predominate over residues 182–198; it reads SKTSPDSTSSVSRQPSS. Composition is skewed to polar residues over residues 238 to 247 and 288 to 299; these read DQSPKSSLSE and QPTSSPGSNWNN. Residues 390-412 show a composition bias toward basic and acidic residues; it reads RKVKGASSDKKRESSKRECKDGS. Polar residues predominate over residues 443–472; sequence CISSTEQPSQVNTQKKRTLQNSSDQENIQN. A compositionally biased stretch (basic and acidic residues) spans 525–541; the sequence is RKSEKDNLFPNQEDKDT. Positions 934–948 are enriched in polar residues; sequence GEQTNLPKMQKQSAG. A Phosphoserine modification is found at S1042. The tract at residues 1092-1164 is disordered; sequence ITTGTRNPHH…EPSLRSKMRR (73 aa). Positions 1112 to 1125 are enriched in low complexity; sequence TSLVLVDTSSVSDT. Residues 1126-1140 are compositionally biased toward polar residues; that stretch reads NPANPENESEGQSSH.

This sequence belongs to the shugoshin family. Part of an astrin (SPAG5)-kinastrin (SKAP) complex containing KNSTRN, SPAG5, PLK1, DYNLL1 and SGO2A. Interacts with CDCA8. Interacts with PPP2CA. As to expression, ubiquitously expressed in proliferating cells. Highly expressed in the testis and oocytes.

The protein localises to the nucleus. It is found in the chromosome. The protein resides in the centromere. It localises to the kinetochore. Functionally, cooperates with PPP2CA to protect centromeric cohesin from separase-mediated cleavage in oocytes specifically during meiosis I. Has a crucial role in protecting REC8 at centromeres from cleavage by separase. During meiosis, protects centromeric cohesion complexes until metaphase II/anaphase II transition, preventing premature release of meiosis-specific REC8 cohesin complexes from anaphase I centromeres. Is thus essential for an accurate gametogenesis. May act by targeting PPP2CA to centromeres, thus leading to cohesin dephosphorylation. Essential for recruiting KIF2C to the inner centromere and for correcting defective kinetochore attachments. Involved in centromeric enrichment of AUKRB in prometaphase. The polypeptide is Shugoshin 2A (Mus musculus (Mouse)).